The primary structure comprises 291 residues: Zinc transporter ZupT (291 aa).

8 helical membrane-spanning segments follow: residues 8–28 (IFIA…GSII), 39–59 (VLSL…FMEI), 74–94 (HWAE…SLLI), 147–167 (GIFT…ATFI), 174–194 (TLGI…GLAV), 209–229 (FIYS…GALI), 233–253 (FIGD…MVFI), and 271–291 (SLYG…LLGQ). Asn-158 and Glu-161 together coordinate Fe(2+). Residues Glu-161 and His-186 each coordinate Zn(2+). Asn-187, Glu-190, and Glu-219 together coordinate Fe(2+). Residue Glu-190 participates in Zn(2+) binding.

This sequence belongs to the ZIP transporter (TC 2.A.5) family. ZupT subfamily.

Its subcellular location is the cell inner membrane. It catalyses the reaction Zn(2+)(in) = Zn(2+)(out). In terms of biological role, mediates zinc uptake. May also transport other divalent cations. This chain is Zinc transporter ZupT, found in Campylobacter jejuni subsp. jejuni serotype O:2 (strain ATCC 700819 / NCTC 11168).